Here is a 214-residue protein sequence, read N- to C-terminus: Thiamine-phosphate synthase (214 aa).

4-amino-2-methyl-5-(diphosphooxymethyl)pyrimidine contacts are provided by residues 37-41 (QYREK) and asparagine 73. Mg(2+) contacts are provided by aspartate 74 and aspartate 93. Residue serine 112 coordinates 4-amino-2-methyl-5-(diphosphooxymethyl)pyrimidine. 139-141 (TIS) serves as a coordination point for 2-[(2R,5Z)-2-carboxy-4-methylthiazol-5(2H)-ylidene]ethyl phosphate. A 4-amino-2-methyl-5-(diphosphooxymethyl)pyrimidine-binding site is contributed by lysine 142. 2-[(2R,5Z)-2-carboxy-4-methylthiazol-5(2H)-ylidene]ethyl phosphate is bound by residues glycine 171 and 191–192 (IS).

This sequence belongs to the thiamine-phosphate synthase family. Mg(2+) serves as cofactor.

It catalyses the reaction 2-[(2R,5Z)-2-carboxy-4-methylthiazol-5(2H)-ylidene]ethyl phosphate + 4-amino-2-methyl-5-(diphosphooxymethyl)pyrimidine + 2 H(+) = thiamine phosphate + CO2 + diphosphate. It carries out the reaction 2-(2-carboxy-4-methylthiazol-5-yl)ethyl phosphate + 4-amino-2-methyl-5-(diphosphooxymethyl)pyrimidine + 2 H(+) = thiamine phosphate + CO2 + diphosphate. The enzyme catalyses 4-methyl-5-(2-phosphooxyethyl)-thiazole + 4-amino-2-methyl-5-(diphosphooxymethyl)pyrimidine + H(+) = thiamine phosphate + diphosphate. It functions in the pathway cofactor biosynthesis; thiamine diphosphate biosynthesis; thiamine phosphate from 4-amino-2-methyl-5-diphosphomethylpyrimidine and 4-methyl-5-(2-phosphoethyl)-thiazole: step 1/1. In terms of biological role, condenses 4-methyl-5-(beta-hydroxyethyl)thiazole monophosphate (THZ-P) and 2-methyl-4-amino-5-hydroxymethyl pyrimidine pyrophosphate (HMP-PP) to form thiamine monophosphate (TMP). The protein is Thiamine-phosphate synthase of Listeria monocytogenes serotype 4b (strain CLIP80459).